A 605-amino-acid polypeptide reads, in one-letter code: Aspartate--tRNA(Asp/Asn) ligase (605 aa).

An L-aspartate-binding site is contributed by E183. An aspartate region spans residues 207–210 (QLYK). An L-aspartate-binding site is contributed by R229. Residues 229–231 (RDE) and Q238 contribute to the ATP site. Residue H456 coordinates L-aspartate. E490 contacts ATP. Residue R497 coordinates L-aspartate. An ATP-binding site is contributed by 542–545 (GLDR).

It belongs to the class-II aminoacyl-tRNA synthetase family. Type 1 subfamily. Homodimer.

The protein localises to the cytoplasm. The catalysed reaction is tRNA(Asx) + L-aspartate + ATP = L-aspartyl-tRNA(Asx) + AMP + diphosphate. Functionally, aspartyl-tRNA synthetase with relaxed tRNA specificity since it is able to aspartylate not only its cognate tRNA(Asp) but also tRNA(Asn). Reaction proceeds in two steps: L-aspartate is first activated by ATP to form Asp-AMP and then transferred to the acceptor end of tRNA(Asp/Asn). The sequence is that of Aspartate--tRNA(Asp/Asn) ligase from Heliobacterium modesticaldum (strain ATCC 51547 / Ice1).